The sequence spans 280 residues: Late embryogenesis abundant protein 76 (280 aa).

2 disordered regions span residues 1-156 and 220-241; these read MASN…GEAV and EEED…TDPT. Basic and acidic residues predominate over residues 28–39; it reads MRDKAEEGKDKT. 5 LEA 11-mer repeat repeats span residues 31-41, 53-63, 75-85, 97-107, and 119-129; these read KAEEGKDKTSQ, TAQAAKDKTSQ, and TTQSSKEKTSQ. Residues 40–114 are compositionally biased toward low complexity; that stretch reads SQTAQKAQQK…TSQAAQTTQQ (75 aa). Composition is skewed to basic and acidic residues over residues 115-127 and 136-145; these read KAHE…KEKT and EKARETKDKT. Positions 230 to 239 are enriched in low complexity; sequence TTTCTTQSTD.

This sequence belongs to the LEA type 4 family.

Functionally, lea proteins are late embryonic proteins abundant in higher plant seed embryos. This Brassica napus (Rape) protein is Late embryogenesis abundant protein 76.